Reading from the N-terminus, the 157-residue chain is MSRKNKKIKKKIFVDTRYNSRIVAKFANRMMYDGKKSISESILYSSIDLLADKLEDSDKMAVFCKALDNIKPLVEVRSRRVGGATYQVPVEVREERREALAMKWIIFAARKASGRSMKEKLSNELLNAYNSTGAAFKKKEDTHRMAEANKAFTHYRW.

It belongs to the universal ribosomal protein uS7 family. In terms of assembly, part of the 30S ribosomal subunit. Contacts proteins S9 and S11.

Functionally, one of the primary rRNA binding proteins, it binds directly to 16S rRNA where it nucleates assembly of the head domain of the 30S subunit. Is located at the subunit interface close to the decoding center, probably blocks exit of the E-site tRNA. The polypeptide is Small ribosomal subunit protein uS7 (Borreliella afzelii (strain PKo) (Borrelia afzelii)).